The primary structure comprises 651 residues: tRNA uridine 5-carboxymethylaminomethyl modification enzyme MnmG (651 aa).

11-16 lines the FAD pocket; sequence GAGHAG. 296–310 serves as a coordination point for NAD(+); the sequence is GPRYCPSIEDKIVRF.

Belongs to the MnmG family. In terms of assembly, homodimer. Heterotetramer of two MnmE and two MnmG subunits. Requires FAD as cofactor.

Its subcellular location is the cytoplasm. Its function is as follows. NAD-binding protein involved in the addition of a carboxymethylaminomethyl (cmnm) group at the wobble position (U34) of certain tRNAs, forming tRNA-cmnm(5)s(2)U34. This chain is tRNA uridine 5-carboxymethylaminomethyl modification enzyme MnmG, found in Chloroflexus aurantiacus (strain ATCC 29366 / DSM 635 / J-10-fl).